Here is a 590-residue protein sequence, read N- to C-terminus: Probable metalloendopeptidase G1-type (590 aa).

His-41 is a Zn(2+) binding site. Glu-44 is a catalytic residue. Residue His-45 participates in Zn(2+) binding.

Belongs to the peptidase M44 family. It depends on Zn(2+) as a cofactor.

Seems to be involved in viral proteins maturation by cleavage at Ala-Gly-|-Xaa motifs. This chain is Probable metalloendopeptidase G1-type, found in Homo sapiens (Human).